The sequence spans 122 residues: Fluoride-specific ion channel FluC (122 aa).

Transmembrane regions (helical) follow at residues 1–21 (MIGT…SRML), 34–54 (FPYG…LFFS), 60–80 (GVHI…FTTF), and 100–120 (FLNI…GFLI).

Belongs to the fluoride channel Fluc/FEX (TC 1.A.43) family.

It is found in the cell inner membrane. It carries out the reaction fluoride(in) = fluoride(out). Its function is as follows. Fluoride-specific ion channel. Important for reducing fluoride concentration in the cell, thus reducing its toxicity. The chain is Fluoride-specific ion channel FluC from Campylobacter lari (strain RM2100 / D67 / ATCC BAA-1060).